A 92-amino-acid chain; its full sequence is MGRSLKKGPFVDDHLMKKVEAAAESEKKQVIKTWSRRSTIFPTFVGQTIAVYDGRKHVPVYVQEDMVGHKLGEFAPTRTYRGHAGDDKKTKR.

It belongs to the universal ribosomal protein uS19 family.

Protein S19 forms a complex with S13 that binds strongly to the 16S ribosomal RNA. This chain is Small ribosomal subunit protein uS19, found in Listeria innocua serovar 6a (strain ATCC BAA-680 / CLIP 11262).